Consider the following 279-residue polypeptide: Probable endonuclease 4 (279 aa).

9 residues coordinate Zn(2+): His66, His106, Glu142, Asp176, His179, His213, Asp226, His228, and Glu258.

Belongs to the AP endonuclease 2 family. The cofactor is Zn(2+).

The enzyme catalyses Endonucleolytic cleavage to 5'-phosphooligonucleotide end-products.. Its function is as follows. Endonuclease IV plays a role in DNA repair. It cleaves phosphodiester bonds at apurinic or apyrimidinic (AP) sites, generating a 3'-hydroxyl group and a 5'-terminal sugar phosphate. The sequence is that of Probable endonuclease 4 from Photobacterium profundum (strain SS9).